The chain runs to 322 residues: MKPTQDSQEKVSIEQQLAVESIRKFLNSKTSYDVLPVSYRLIVLDTSLLVKKSLNVLLQNSIVSAPLWDSKTSRFAGLLTTTDFINVIQYYFSNPDKFELVDKLQLDGLKDIERALGVDQLDTASIHPSRPLFEACLKMLESRSGRIPLIDQDEETHREIVVSVLTQYRILKFVALNCRETHFLKIPIGDLNIITQDNMKSCQMTTPVIDVIQMLTQGRVSSVPIIDENGYLINVYEAYDVLGLIKGGIYNDLSLSVGEALMRRSDDFEGVYTCTKNDKLSTIMDNIRKARVHRFFVVDDVGRLVGVLTLSDILKYILLGSN.

CBS domains are found at residues 37 to 97 (VSYR…NPDK), 118 to 181 (VDQL…CRET), 194 to 253 (ITQD…YNDL), and 262 to 322 (MRRS…LGSN). Residues Ile-42, Arg-146, 166–169 (TQYR), and Thr-195 contribute to the ADP site. Residues Thr-195, Lys-200, and 221 to 222 (SS) contribute to the AMP site. Residues Thr-195, Lys-200, and 221–222 (SS) each bind ATP. ADP-binding positions include 221–222 (SS), 291–293 (RVH), and 309–312 (TLSD). 309–312 (TLSD) provides a ligand contact to AMP. 309 to 312 (TLSD) serves as a coordination point for ATP.

Belongs to the 5'-AMP-activated protein kinase gamma subunit family. In terms of assembly, AMPK is a heterotrimer of an alpha catalytic subunit (SNF1), a beta (SIP1, SIP2 or GAL83) and a gamma non-catalytic subunits (SNF4). Note=Interaction between SNF1 and SNF4 is inhibited by high levels of glucose.

It localises to the nucleus. The protein localises to the cytoplasm. Its function is as follows. Adenine nucleotides-binding subunit gamma of AMP-activated protein kinase (AMPK), an energy sensor protein kinase that plays a key role in regulating cellular energy metabolism. In response to reduction of intracellular ATP levels, AMPK activates energy-producing pathways and inhibits energy-consuming processes: inhibits protein, carbohydrate and lipid biosynthesis, as well as cell growth and proliferation. AMPK acts via direct phosphorylation of metabolic enzymes, and by longer-term effects via phosphorylation of transcription regulators. Gamma non-catalytic subunit mediates binding to AMP, ADP and ATP, leading to activate or inhibit AMPK: AMP-binding results in allosteric activation of alpha catalytic subunit (SNF1) both by inducing phosphorylation and preventing dephosphorylation of catalytic subunits. This Saccharomyces cerevisiae (strain ATCC 204508 / S288c) (Baker's yeast) protein is 5'-AMP-activated protein kinase subunit gamma (SNF4).